The following is a 149-amino-acid chain: Probable glycine-rich RNA-binding protein 1 (149 aa).

The region spanning 8 to 83 (YRCFVGGLAW…LDGRNITAQA (76 aa)) is the RRM domain. A disordered region spans residues 80 to 149 (TAQARGSGTR…GRSEGGSWRN (70 aa)). 3 stretches are compositionally biased toward gly residues: residues 87-101 (GTRG…SGGY), 110-123 (YNRG…GGYG), and 131-143 (YGDG…GRSE).

Belongs to the GR-RBP family.

In terms of biological role, possibly has a role in RNA transcription or processing during stress. The protein is Probable glycine-rich RNA-binding protein 1 (RBG1) of Arabidopsis thaliana (Mouse-ear cress).